The primary structure comprises 298 residues: UDP-N-acetylenolpyruvoylglucosamine reductase (298 aa).

Positions 26–191 (KTGGEAEYLA…LSATFSLKPG (166 aa)) constitute an FAD-binding PCMH-type domain. Arg-170 is an active-site residue. The Proton donor role is filled by Ser-220. Glu-290 is a catalytic residue.

The protein belongs to the MurB family. It depends on FAD as a cofactor.

The protein resides in the cytoplasm. It carries out the reaction UDP-N-acetyl-alpha-D-muramate + NADP(+) = UDP-N-acetyl-3-O-(1-carboxyvinyl)-alpha-D-glucosamine + NADPH + H(+). It participates in cell wall biogenesis; peptidoglycan biosynthesis. Cell wall formation. This Lactobacillus acidophilus (strain ATCC 700396 / NCK56 / N2 / NCFM) protein is UDP-N-acetylenolpyruvoylglucosamine reductase.